A 445-amino-acid polypeptide reads, in one-letter code: Tubulin alpha-1 chain (445 aa).

Glutamine 11 lines the GTP pocket. An N6-acetyllysine modification is found at lysine 40. 7 residues coordinate GTP: glutamate 71, serine 140, glycine 144, threonine 145, threonine 179, asparagine 206, and asparagine 228. Glutamate 71 provides a ligand contact to Mg(2+). Glutamate 254 is a catalytic residue.

This sequence belongs to the tubulin family. As to quaternary structure, dimer of alpha and beta chains. A typical microtubule is a hollow water-filled tube with an outer diameter of 25 nm and an inner diameter of 15 nM. Alpha-beta heterodimers associate head-to-tail to form protofilaments running lengthwise along the microtubule wall with the beta-tubulin subunit facing the microtubule plus end conferring a structural polarity. Microtubules usually have 13 protofilaments but different protofilament numbers can be found in some organisms and specialized cells. The cofactor is Mg(2+). Acetylation of alpha chains at Lys-40 stabilizes microtubules and affects affinity and processivity of microtubule motors. This modification has a role in multiple cellular functions, ranging from cell motility, cell cycle progression or cell differentiation to intracellular trafficking and signaling.

The protein localises to the cytoplasm. It localises to the cytoskeleton. The enzyme catalyses GTP + H2O = GDP + phosphate + H(+). Functionally, tubulin is the major constituent of microtubules, a cylinder consisting of laterally associated linear protofilaments composed of alpha- and beta-tubulin heterodimers. Microtubules grow by the addition of GTP-tubulin dimers to the microtubule end, where a stabilizing cap forms. Below the cap, tubulin dimers are in GDP-bound state, owing to GTPase activity of alpha-tubulin. This is Tubulin alpha-1 chain from Stylonychia lemnae (Ciliate).